A 162-amino-acid polypeptide reads, in one-letter code: Large ribosomal subunit protein uL10 (162 aa).

It belongs to the universal ribosomal protein uL10 family. Part of the ribosomal stalk of the 50S ribosomal subunit. The N-terminus interacts with L11 and the large rRNA to form the base of the stalk. The C-terminus forms an elongated spine to which L12 dimers bind in a sequential fashion forming a multimeric L10(L12)X complex.

Functionally, forms part of the ribosomal stalk, playing a central role in the interaction of the ribosome with GTP-bound translation factors. This Borrelia garinii subsp. bavariensis (strain ATCC BAA-2496 / DSM 23469 / PBi) (Borreliella bavariensis) protein is Large ribosomal subunit protein uL10.